The chain runs to 95 residues: MYAVTFDLDTNCLNENAVNLSKVYSDIRKFMEQHGFKWQQGSVYFGDETINAVTCVATVQILAKQIPSFAVCVKDVRMLKIEENNDLMPAIKIVL.

This sequence belongs to the VapD ribonuclease family. Homodimer.

Functionally, cleaves ssRNA, mostly between U:A. This Helicobacter pylori (strain ATCC 700392 / 26695) (Campylobacter pylori) protein is Endoribonuclease VapD homolog.